The following is a 442-amino-acid chain: MEILLIVLGAVVAGLLCPVQTAAEATITLTGSDIPTSISIHHGTRTPTSSGELSQSTFSSSSTNSSDSFYTTTSASYTLLVGSHTTSTVTANETTLSGNATATETSREPQPTNTRPCNGYAEFCARSYGNITQVAAHNSPFVRPGNIASNQELDVVTQLNDGIRMLQFQTHLVNGTIYLCHSSCDLLNAGTLESYLKKVADWLRDNPYDVVSLLIGNGDFVGVKNFTAPIQSSGLIDHVYTPKNHSIALDDWPTLSEVILSGKRAMVFMDYEANHGEVPYILDEFTYIWETPFSPTDRNFPCDIQRPPGLNEADARKRMYMANHNLNLEISIAGATILVPNTVLLNETNAVSGFGSMGAMAGNCTEKWNRPPNFLLVDYYNIGNVNGSVFQVAAKLNNVTYNGKCCGRTTSLASESVLGRLSGKLEMIYSMIVINILVMTIL.

The first 23 residues, 1–23, serve as a signal peptide directing secretion; the sequence is MEILLIVLGAVVAGLLCPVQTAA. Disordered stretches follow at residues 36–67 and 91–115; these read TSIS…NSSD and ANET…TNTR. Residues 48–67 show a composition bias toward low complexity; the sequence is TSSGELSQSTFSSSSTNSSD. Residues asparagine 64, asparagine 92, asparagine 99, asparagine 130, asparagine 174, asparagine 225, asparagine 244, asparagine 346, asparagine 363, asparagine 386, and asparagine 398 are each glycosylated (N-linked (GlcNAc...) asparagine).

The protein localises to the secreted. This is an uncharacterized protein from Arthroderma benhamiae (strain ATCC MYA-4681 / CBS 112371) (Trichophyton mentagrophytes).